Reading from the N-terminus, the 308-residue chain is 3'(2'),5'-bisphosphate nucleotidase 1 (308 aa).

Position 2 is an N-acetylalanine (Ala-2). The active-site Proton acceptor is the Asp-51. Mg(2+) contacts are provided by Glu-74, Asp-117, Leu-119, and Asp-120. The active-site Proton acceptor is Thr-122. Residue Thr-122 is modified to Phosphothreonine. Residues Thr-195, His-198, Gly-220, and Lys-224 each coordinate AMP. The residue at position 240 (Ser-240) is a Phosphoserine. Lys-244 carries the N6-succinyllysine modification. Asp-247 is a binding site for Mg(2+).

This sequence belongs to the inositol monophosphatase superfamily. It depends on Mg(2+) as a cofactor. As to expression, widely expressed. Highly expressed in kidney.

The catalysed reaction is adenosine 3',5'-bisphosphate + H2O = AMP + phosphate. It carries out the reaction adenosine 2',5'-bisphosphate + H2O = AMP + phosphate. The enzyme catalyses 3'-phosphoadenylyl sulfate + H2O = adenosine 5'-phosphosulfate + phosphate. It catalyses the reaction 1D-myo-inositol 1,4-bisphosphate + H2O = 1D-myo-inositol 4-phosphate + phosphate. The catalysed reaction is 1D-myo-inositol 1,3,4-trisphosphate + H2O = 1D-myo-inositol 3,4-bisphosphate + phosphate. Its activity is regulated as follows. Uncompetitively inhibited by Li(+) (IC(50)=157 uM). PAP hydrolysis is competitively inhibited by PAPS (IC(50)=0.7 uM) and by inositol 1,4-bisphosphate (IC(50)=15 uM). Phosphatase that converts 3'(2')-phosphoadenosine 5'-phosphate (PAP) to AMP and adenosine 3'-phosphate 5'-phosphosulfate (PAPS) to adenosine 5'-phosphosulfate (APS). Is also able to hydrolyze inositol 1,4-bisphosphate (Ins(1,4)P2) and inositol 1,3,4-trisphosphate (Ins(1,3,4)P3), and is not active on Ins(1)P, Ins(4)P, Ins(3,4)P2, Ins(1,4,5)P3, Ins(1,3,4,5)P4, Ins(1,3,4,5,6)P5 or InsP6. Probably prevents the toxic accumulation of PAP, a compound which inhibits a variety of proteins, including PAPS-utilizing enzymes such as sulfotransferases, and RNA processing enzymes. Could also play a role in inositol recycling and phosphoinositide metabolism. This chain is 3'(2'),5'-bisphosphate nucleotidase 1 (Bpnt1), found in Mus musculus (Mouse).